The chain runs to 241 residues: Carboxy-S-adenosyl-L-methionine synthase (241 aa).

S-adenosyl-L-methionine-binding positions include tyrosine 38, 63-65 (GCS), 88-89 (DN), 116-117 (DI), asparagine 131, and arginine 198.

It belongs to the class I-like SAM-binding methyltransferase superfamily. Cx-SAM synthase family. As to quaternary structure, homodimer.

The enzyme catalyses prephenate + S-adenosyl-L-methionine = carboxy-S-adenosyl-L-methionine + 3-phenylpyruvate + H2O. Functionally, catalyzes the conversion of S-adenosyl-L-methionine (SAM) to carboxy-S-adenosyl-L-methionine (Cx-SAM). The protein is Carboxy-S-adenosyl-L-methionine synthase of Pseudoalteromonas translucida (strain TAC 125).